The chain runs to 65 residues: UPF0434 protein CPS_2127 (65 aa).

This sequence belongs to the UPF0434 family.

In Colwellia psychrerythraea (strain 34H / ATCC BAA-681) (Vibrio psychroerythus), this protein is UPF0434 protein CPS_2127.